We begin with the raw amino-acid sequence, 599 residues long: Aspartate--tRNA ligase (599 aa).

E180 serves as a coordination point for L-aspartate. Residues 204–207 (QIFK) are aspartate. An L-aspartate-binding site is contributed by R226. ATP is bound by residues 226 to 228 (RDE) and Q235. An L-aspartate-binding site is contributed by H454. E488 serves as a coordination point for ATP. R495 contributes to the L-aspartate binding site. ATP is bound at residue 540 to 543 (GLDR).

Belongs to the class-II aminoacyl-tRNA synthetase family. Type 1 subfamily. Homodimer.

The protein localises to the cytoplasm. The catalysed reaction is tRNA(Asp) + L-aspartate + ATP = L-aspartyl-tRNA(Asp) + AMP + diphosphate. Its function is as follows. Catalyzes the attachment of L-aspartate to tRNA(Asp) in a two-step reaction: L-aspartate is first activated by ATP to form Asp-AMP and then transferred to the acceptor end of tRNA(Asp). The protein is Aspartate--tRNA ligase of Clostridium botulinum (strain Eklund 17B / Type B).